A 74-amino-acid chain; its full sequence is Antimicrobial peptide AcrAP1 (74 aa).

Residues 1–22 form the signal peptide; it reads MEIKYLLTVFLVLLIVSDHCQA. Lysine 40 bears the Lysine amide mark. Residues 46–74 constitute a propeptide that is removed on maturation; sequence DLDGQIDRFRNFRKRDAELEELLSKLPIY.

The protein belongs to the non-disulfide-bridged peptide (NDBP) superfamily. Short antimicrobial peptide (group 4) family. In terms of tissue distribution, expressed by the venom gland.

The protein resides in the secreted. It is found in the target cell membrane. In terms of biological role, has antimicrobial activity against the Gram-positive bacteria S.aureus (MIC=8 uM) and the yeast C.albicans (MIC=16 uM). Causes hemolysis on horse erythrocytes (64 uM for 100% hemolysis). Minimum bactericidal concentrations have also been tested against S.aureus and is four-fold higher (MBC=32 uM). This is Antimicrobial peptide AcrAP1 from Androctonus crassicauda (Arabian fat-tailed scorpion).